Reading from the N-terminus, the 114-residue chain is Ribosome-binding factor A (114 aa).

Belongs to the RbfA family. In terms of assembly, monomer. Binds 30S ribosomal subunits, but not 50S ribosomal subunits or 70S ribosomes.

Its subcellular location is the cytoplasm. In terms of biological role, one of several proteins that assist in the late maturation steps of the functional core of the 30S ribosomal subunit. Associates with free 30S ribosomal subunits (but not with 30S subunits that are part of 70S ribosomes or polysomes). Required for efficient processing of 16S rRNA. May interact with the 5'-terminal helix region of 16S rRNA. The polypeptide is Ribosome-binding factor A (Macrococcus caseolyticus (strain JCSC5402) (Macrococcoides caseolyticum)).